The primary structure comprises 108 residues: Ig kappa chain V-V region MOPC 173 (108 aa).

The framework-1 stretch occupies residues 1–23; that stretch reads DIQMTQTTSSLSASLGDRVTISC. Cys23 and Cys88 form a disulfide bridge. Residues 24–34 are complementarity-determining-1; the sequence is SASQSIGNYLB. The tract at residues 35 to 49 is framework-2; that stretch reads WYQQKPDGTVKLLIY. The complementarity-determining-2 stretch occupies residues 50–56; the sequence is YTSSLHS. Residues 57–88 form a framework-3 region; sequence GVPSRFSGSGSGTDYSLTISBLZPZBIATYYC. The segment at 89-97 is complementarity-determining-3; that stretch reads QQYSKLPRT. Residues 98-108 form a framework-4 region; sequence FGGGTKLEIKR.

This chain is Ig kappa chain V-V region MOPC 173, found in Mus musculus (Mouse).